The primary structure comprises 866 residues: Probable beta-glucosidase F (866 aa).

An N-terminal signal peptide occupies residues 1–20; sequence MAAFPAYLALLSYLVPGALS. Residues asparagine 65, asparagine 73, and asparagine 257 are each glycosylated (N-linked (GlcNAc...) asparagine). Aspartate 285 is an active-site residue. N-linked (GlcNAc...) asparagine glycans are attached at residues asparagine 328, asparagine 360, asparagine 395, asparagine 421, asparagine 474, asparagine 659, asparagine 664, and asparagine 724. Residues 725 to 748 form a disordered region; that stretch reads SSKTYPYPDGYTTEPKPAPRAGGA.

This sequence belongs to the glycosyl hydrolase 3 family.

It localises to the secreted. It carries out the reaction Hydrolysis of terminal, non-reducing beta-D-glucosyl residues with release of beta-D-glucose.. It functions in the pathway glycan metabolism; cellulose degradation. In terms of biological role, beta-glucosidases are one of a number of cellulolytic enzymes involved in the degradation of cellulosic biomass. Catalyzes the last step releasing glucose from the inhibitory cellobiose. This Aspergillus oryzae (strain ATCC 42149 / RIB 40) (Yellow koji mold) protein is Probable beta-glucosidase F (bglF).